Consider the following 71-residue polypeptide: Ranatuerin-2PLa (71 aa).

A signal peptide spans 1–22 (MFTTKKSMLLFFFLGTISLSLC). The propeptide occupies 23 to 41 (EQERGADEDDGVEMTEEEV). The cysteines at positions 66 and 71 are disulfide-linked.

As to expression, expressed by the skin glands.

The protein localises to the secreted. May have antimicrobial activity against the Gram-negative bacterium E.coli. This is Ranatuerin-2PLa from Lithobates palustris (Pickerel frog).